The sequence spans 283 residues: Protein canopy homolog 3 (283 aa).

The N-terminal stretch at 1-35 (MEPLPEPTSRPRLRPRPRCLLLLPLLLLLLLLLPA) is a signal peptide. Residues 55 to 276 (SKCEVCKYVA…EGIQKASPLT (222 aa)) enclose the Saposin B-type domain. N-linked (GlcNAc...) asparagine glycosylation occurs at Asn161. Residues 161-187 (NETSAEVADLKKQCDVLVEEFEEVIED) are a coiled coil. A disordered region spans residues 223 to 283 (KGDTAALGGK…PLTHSPPDEL (61 aa)).

Belongs to the canopy family. Interacts with HSP90B1; this interaction is disrupted in the presence of ATP. Interacts with TLR1, TLR2, TLR4 and TLR9.

The protein localises to the endoplasmic reticulum. In terms of biological role, toll-like receptor (TLR)-specific co-chaperone for HSP90B1. Required for proper TLR folding, except that of TLR3, and hence controls TLR exit from the endoplasmic reticulum. Consequently, required for both innate and adaptive immune responses. The sequence is that of Protein canopy homolog 3 (CNPY3) from Sus scrofa (Pig).